The primary structure comprises 256 residues: uncharacterized protein (256 aa).

The signal sequence occupies residues 1–22; sequence MGYLKRFALYISVMILIFAIAG. A lipid anchor (N-palmitoyl cysteine) is attached at Cys-23. Cys-23 carries S-diacylglycerol cysteine lipidation.

This sequence belongs to the staphylococcal tandem lipoprotein family.

It localises to the cell membrane. This is an uncharacterized protein from Staphylococcus aureus (strain COL).